Here is a 531-residue protein sequence, read N- to C-terminus: CTP synthase (531 aa).

The segment at 1-264 (MPKFVVVTGG…GDFLVERLRL (264 aa)) is amidoligase domain. Serine 13 is a CTP binding site. Residue serine 13 participates in UTP binding. Position 14 to 19 (14 to 19 (GLGKGV)) interacts with ATP. Tyrosine 54 is a binding site for L-glutamine. ATP is bound at residue aspartate 71. Mg(2+) is bound by residues aspartate 71 and glutamate 139. Residues 146–148 (DYE), 185–190 (KTKPLQ), and lysine 221 contribute to the CTP site. Residues 185 to 190 (KTKPLQ) and lysine 221 each bind UTP. The region spanning 293-531 (CGKYVELPDA…LSAAVEQSRR (239 aa)) is the Glutamine amidotransferase type-1 domain. Position 351 (glycine 351) interacts with L-glutamine. The active-site Nucleophile; for glutamine hydrolysis is cysteine 378. L-glutamine is bound by residues 379-382 (FGMQ), glutamate 402, and arginine 459. Residues histidine 504 and glutamate 506 contribute to the active site.

The protein belongs to the CTP synthase family. In terms of assembly, homotetramer.

It catalyses the reaction UTP + L-glutamine + ATP + H2O = CTP + L-glutamate + ADP + phosphate + 2 H(+). The catalysed reaction is L-glutamine + H2O = L-glutamate + NH4(+). The enzyme catalyses UTP + NH4(+) + ATP = CTP + ADP + phosphate + 2 H(+). It participates in pyrimidine metabolism; CTP biosynthesis via de novo pathway; CTP from UDP: step 2/2. Its activity is regulated as follows. Allosterically activated by GTP, when glutamine is the substrate; GTP has no effect on the reaction when ammonia is the substrate. The allosteric effector GTP functions by stabilizing the protein conformation that binds the tetrahedral intermediate(s) formed during glutamine hydrolysis. Inhibited by the product CTP, via allosteric rather than competitive inhibition. Functionally, catalyzes the ATP-dependent amination of UTP to CTP with either L-glutamine or ammonia as the source of nitrogen. Regulates intracellular CTP levels through interactions with the four ribonucleotide triphosphates. In Pyrobaculum calidifontis (strain DSM 21063 / JCM 11548 / VA1), this protein is CTP synthase.